The sequence spans 268 residues: Probable RNA methyltransferase C2A9.10 (268 aa).

In terms of domain architecture, Bin3-type SAM spans Asp23–Gly258.

Belongs to the methyltransferase superfamily.

Probable RNA methyltransferase. The polypeptide is Probable RNA methyltransferase C2A9.10 (Schizosaccharomyces pombe (strain 972 / ATCC 24843) (Fission yeast)).